The following is a 435-amino-acid chain: MADQEADTNIEIWKIKKLIKGLESARGNGTSMISLIMPPRDQVSRVTKMLGDEYGTASNIKSRVNRQSVLSAITSAQQRLKLYNKVPTNGLVLYTGTIVNDDGKEKKVTFDFEPFRPINASLYLCDNKFHTGALNELLESDDKFGFIVMDGNGTLFGTLSGNTREVLHKFTVDLPKKHGRGGQSALRFARLRMEKRHNYVRKTAELATQFYINPATSQPNVAGLILAGSADFKTELSQSELFDPRLQAKILNVVDVSYGGENGFNQAIELSAEILSNVKFIQEKKLIGKYFEEISQDTGKYVFGVEDTLKALEMGAIETLIVWENLDINRYELKNSTSGEIVVKHFGKDQETDQSNFHDAETNAELEVQEKMPLLEWFANEYKRFGCTLEFVTNKSQEGSQFCRGFGGIGGMLRYQLDMRTFDELSDGEVYEDSD.

Residue Ala-2 is modified to N-acetylalanine.

Belongs to the eukaryotic release factor 1 family. As to quaternary structure, heterodimer of two subunits, one of which binds GTP. Interacts with OR.

Its subcellular location is the cytoplasm. In terms of biological role, directs the termination of nascent peptide synthesis (translation) in response to the termination codons UAA, UAG and UGA. Modulates plant growth and development. The protein is Eukaryotic peptide chain release factor subunit 1-2 of Brassica oleracea var. botrytis (Cauliflower).